The following is a 449-amino-acid chain: Xylose isomerase (449 aa).

Residues His101 and Asp104 contribute to the active site. The Mg(2+) site is built by Glu232, Glu268, His271, Asp296, Asp307, Asp309, and Asp340.

It belongs to the xylose isomerase family. As to quaternary structure, homotetramer. Mg(2+) is required as a cofactor.

It localises to the cytoplasm. It carries out the reaction alpha-D-xylose = alpha-D-xylulofuranose. The polypeptide is Xylose isomerase (Bifidobacterium longum (strain NCC 2705)).